Consider the following 117-residue polypeptide: Large ribosomal subunit protein bL17 (117 aa).

Belongs to the bacterial ribosomal protein bL17 family. In terms of assembly, part of the 50S ribosomal subunit. Contacts protein L32.

The protein is Large ribosomal subunit protein bL17 of Campylobacter jejuni subsp. jejuni serotype O:6 (strain 81116 / NCTC 11828).